The sequence spans 267 residues: Indole-3-glycerol phosphate synthase 1 (267 aa).

Belongs to the TrpC family.

It carries out the reaction 1-(2-carboxyphenylamino)-1-deoxy-D-ribulose 5-phosphate + H(+) = (1S,2R)-1-C-(indol-3-yl)glycerol 3-phosphate + CO2 + H2O. Its pathway is amino-acid biosynthesis; L-tryptophan biosynthesis; L-tryptophan from chorismate: step 4/5. The sequence is that of Indole-3-glycerol phosphate synthase 1 (trpC1) from Ralstonia nicotianae (strain ATCC BAA-1114 / GMI1000) (Ralstonia solanacearum).